Consider the following 240-residue polypeptide: 1-(5-phosphoribosyl)-5-[(5-phosphoribosylamino)methylideneamino] imidazole-4-carboxamide isomerase (240 aa).

Asp-8 functions as the Proton acceptor in the catalytic mechanism. The Proton donor role is filled by Asp-129.

It belongs to the HisA/HisF family.

It is found in the cytoplasm. It carries out the reaction 1-(5-phospho-beta-D-ribosyl)-5-[(5-phospho-beta-D-ribosylamino)methylideneamino]imidazole-4-carboxamide = 5-[(5-phospho-1-deoxy-D-ribulos-1-ylimino)methylamino]-1-(5-phospho-beta-D-ribosyl)imidazole-4-carboxamide. The protein operates within amino-acid biosynthesis; L-histidine biosynthesis; L-histidine from 5-phospho-alpha-D-ribose 1-diphosphate: step 4/9. The polypeptide is 1-(5-phosphoribosyl)-5-[(5-phosphoribosylamino)methylideneamino] imidazole-4-carboxamide isomerase (Herpetosiphon aurantiacus (strain ATCC 23779 / DSM 785 / 114-95)).